A 377-amino-acid chain; its full sequence is Flagellin D (377 aa).

The stretch at asparagine 104 to glutamate 128 forms a coiled coil.

This sequence belongs to the bacterial flagellin family. Heteromer of multiple flagellin subunits including FlaA, FlaB, FlaC, FlaD and possibly FlaE.

The protein localises to the secreted. It localises to the bacterial flagellum. Its function is as follows. Flagellin is the subunit protein which polymerizes to form the filaments of bacterial flagella. FlaD is not essential for flagellar synthesis and motility. May have a role in virulence unrelated to motility. This Vibrio anguillarum (Listonella anguillarum) protein is Flagellin D (flaD).